The sequence spans 270 residues: NAD kinase (270 aa).

Residue Asp57 is the Proton acceptor of the active site. NAD(+) contacts are provided by residues 57 to 58 (DG), 125 to 126 (NE), Arg150, and Asn227.

This sequence belongs to the NAD kinase family. The cofactor is a divalent metal cation.

It localises to the cytoplasm. The enzyme catalyses NAD(+) + ATP = ADP + NADP(+) + H(+). Involved in the regulation of the intracellular balance of NAD and NADP, and is a key enzyme in the biosynthesis of NADP. Catalyzes specifically the phosphorylation on 2'-hydroxyl of the adenosine moiety of NAD to yield NADP. In Ureaplasma parvum serovar 3 (strain ATCC 700970), this protein is NAD kinase.